Reading from the N-terminus, the 74-residue chain is Dermaseptin-B3 (74 aa).

The N-terminal stretch at 1–22 is a signal peptide; the sequence is MAFLKKSVFLVLFLGLVSLSIC. Positions 23-43 are excised as a propeptide; that stretch reads EEEKREEENEEKQEDDEQSEE.

In terms of tissue distribution, expressed by the skin glands.

It localises to the secreted. Possesses a potent antimicrobial activity against Gram-positive and Gram-negative bacteria. Probably acts by disturbing membrane functions with its amphipathic structure. This Phyllomedusa bicolor (Two-colored leaf frog) protein is Dermaseptin-B3.